The chain runs to 430 residues: Adenylosuccinate synthetase (430 aa).

Residues 12–18 (GDEGKGK) and 40–42 (GHT) each bind GTP. D13 acts as the Proton acceptor in catalysis. The Mg(2+) site is built by D13 and G40. IMP is bound by residues 13-16 (DEGK), 38-41 (NAGH), T128, R142, Q223, T238, and R302. The active-site Proton donor is H41. Residue 298 to 304 (TTTGRPR) coordinates substrate. GTP-binding positions include R304, 330–332 (SID), and 412–414 (SVG).

Belongs to the adenylosuccinate synthetase family. Homodimer. The cofactor is Mg(2+).

Its subcellular location is the cytoplasm. The enzyme catalyses IMP + L-aspartate + GTP = N(6)-(1,2-dicarboxyethyl)-AMP + GDP + phosphate + 2 H(+). The protein operates within purine metabolism; AMP biosynthesis via de novo pathway; AMP from IMP: step 1/2. Functionally, plays an important role in the de novo pathway of purine nucleotide biosynthesis. Catalyzes the first committed step in the biosynthesis of AMP from IMP. This chain is Adenylosuccinate synthetase, found in Exiguobacterium sibiricum (strain DSM 17290 / CCUG 55495 / CIP 109462 / JCM 13490 / 255-15).